The primary structure comprises 575 residues: uncharacterized protein (575 aa).

The first 28 residues, 1-28 (MSNLLWKSLVVSPAVLGATLLVSSAAIA), serve as a signal peptide directing secretion. The SLH domain maps to 87–151 (SVSQFSDVQP…DRVNELIATA (65 aa)). The stretch at 158–196 (KQDLATLQRLQEEFSAELATLRGRVDALEARTAELEANQ) forms a coiled coil.

The protein belongs to the OprB family.

This is an uncharacterized protein from Nostoc sp. (strain PCC 7120 / SAG 25.82 / UTEX 2576).